A 502-amino-acid chain; its full sequence is Lysine--tRNA ligase (502 aa).

Mg(2+) is bound by residues E413 and E420.

This sequence belongs to the class-II aminoacyl-tRNA synthetase family. In terms of assembly, homodimer. The cofactor is Mg(2+).

The protein resides in the cytoplasm. The enzyme catalyses tRNA(Lys) + L-lysine + ATP = L-lysyl-tRNA(Lys) + AMP + diphosphate. The chain is Lysine--tRNA ligase from Aromatoleum aromaticum (strain DSM 19018 / LMG 30748 / EbN1) (Azoarcus sp. (strain EbN1)).